Here is a 124-residue protein sequence, read N- to C-terminus: Small ribosomal subunit protein uS12 (124 aa).

Asp-89 carries the post-translational modification 3-methylthioaspartic acid.

It belongs to the universal ribosomal protein uS12 family. As to quaternary structure, part of the 30S ribosomal subunit. Contacts proteins S8 and S17. May interact with IF1 in the 30S initiation complex.

With S4 and S5 plays an important role in translational accuracy. In terms of biological role, interacts with and stabilizes bases of the 16S rRNA that are involved in tRNA selection in the A site and with the mRNA backbone. Located at the interface of the 30S and 50S subunits, it traverses the body of the 30S subunit contacting proteins on the other side and probably holding the rRNA structure together. The combined cluster of proteins S8, S12 and S17 appears to hold together the shoulder and platform of the 30S subunit. The protein is Small ribosomal subunit protein uS12 of Vibrio atlanticus (strain LGP32) (Vibrio splendidus (strain Mel32)).